Here is a 70-residue protein sequence, read N- to C-terminus: NAD(P)H-quinone oxidoreductase subunit L (70 aa).

The next 2 membrane-spanning stretches (helical) occupy residues 2-22 (IVPLLYLALAGAYLLVVPVAL) and 39-59 (TFMYFLVFLFFPGLLVLSPFV).

Belongs to the complex I NdhL subunit family. NDH-1 can be composed of about 15 different subunits; different subcomplexes with different compositions have been identified which probably have different functions.

It is found in the cellular thylakoid membrane. It carries out the reaction a plastoquinone + NADH + (n+1) H(+)(in) = a plastoquinol + NAD(+) + n H(+)(out). The catalysed reaction is a plastoquinone + NADPH + (n+1) H(+)(in) = a plastoquinol + NADP(+) + n H(+)(out). Its function is as follows. NDH-1 shuttles electrons from an unknown electron donor, via FMN and iron-sulfur (Fe-S) centers, to quinones in the respiratory and/or the photosynthetic chain. The immediate electron acceptor for the enzyme in this species is believed to be plastoquinone. Couples the redox reaction to proton translocation, and thus conserves the redox energy in a proton gradient. Cyanobacterial NDH-1 also plays a role in inorganic carbon-concentration. This chain is NAD(P)H-quinone oxidoreductase subunit L, found in Trichormus variabilis (strain ATCC 29413 / PCC 7937) (Anabaena variabilis).